Reading from the N-terminus, the 984-residue chain is Hyaluronate lyase (984 aa).

Composition is skewed to polar residues over residues 1–12 (MKQVVDNQTQNK), 19–32 (DFNQ…SWSH), and 54–66 (IQRT…SLSS). Disordered regions lie at residues 1-32 (MKQV…SWSH) and 49-68 (DKSP…SSDK). The N-terminal stretch at 1–40 (MKQVVDNQTQNKELVKNGDFNQTNPVSGSWSHTSAREWSA) is a signal peptide. Active-site residues include N429, H479, and Y488. The span at 701–726 (TEKDAKREDTTKEFMSKHSKDAKEKT) shows a compositional bias: basic and acidic residues. The tract at residues 701–728 (TEKDAKREDTTKEFMSKHSKDAKEKTGQ) is disordered.

It belongs to the polysaccharide lyase 8 family.

It localises to the secreted. The enzyme catalyses [hyaluronan](n) = n 3-(4-deoxy-beta-D-gluc-4-enuronosyl)-N-acetyl-D-glucosamine + H2O. This is Hyaluronate lyase from Streptococcus agalactiae serotype III (strain NEM316).